Here is a 270-residue protein sequence, read N- to C-terminus: tRNA pseudouridine synthase A (270 aa).

Asp-60 acts as the Nucleophile in catalysis. The RNA binding stretch occupies residues 107 to 111; sequence FHARF. Position 118 (Tyr-118) interacts with substrate. The segment at 168 to 172 is interaction with tRNA; the sequence is QCQSR.

Belongs to the tRNA pseudouridine synthase TruA family. As to quaternary structure, homodimer.

It carries out the reaction uridine(38/39/40) in tRNA = pseudouridine(38/39/40) in tRNA. In terms of biological role, formation of pseudouridine at positions 38, 39 and 40 in the anticodon stem and loop of transfer RNAs. This is tRNA pseudouridine synthase A from Escherichia coli (strain K12 / DH10B).